We begin with the raw amino-acid sequence, 155 residues long: MAEGDITTFNAITESFSLPIGNYKKPKLLYCNNGGYFLRILPEGVVDGTRDRNDLYITLKLSALSQGEVHIKTTETGCYLAMDSSGQLYGTLTPNEECLFLETLEENHYNTYKSKKYADMNWFVGIKKNGASKKGSRTHYGQKAILFLPLPASPD.

Positions 1–15 are excised as a propeptide; that stretch reads MAEGDITTFNAITES. Residue Asn-33 participates in heparin binding. The segment at 127 to 143 is heparin-binding; the sequence is KKNGASKKGSRTHYGQK.

Belongs to the heparin-binding growth factors family.

It is found in the secreted. The protein localises to the cytoplasm. The protein resides in the cell cortex. Its subcellular location is the cytosol. It localises to the nucleus. In terms of biological role, plays an important role in the regulation of cell survival, cell division, angiogenesis, cell differentiation and cell migration. Functions as a potent mitogen in vitro. Acts as a ligand for FGFR1 and integrins. Binds to FGFR1 in the presence of heparin leading to FGFR1 dimerization and activation via sequential autophosphorylation on tyrosine residues which act as docking sites for interacting proteins, leading to the activation of several signaling cascades. Binds to integrins. Its binding to integrins and subsequent ternary complex formation with integrins and FGFR1 are essential for FGF1 signaling. The protein is Fibroblast growth factor 1 (fgf1) of Xenopus laevis (African clawed frog).